The sequence spans 552 residues: Urocanate hydratase (552 aa).

NAD(+)-binding positions include 49–50, Q127, 173–175, D193, 239–240, 260–264, 270–271, and Y319; these read GG, GMG, NA, QTSAH, and YI. C407 is an active-site residue. G489 contributes to the NAD(+) binding site.

This sequence belongs to the urocanase family. It depends on NAD(+) as a cofactor.

Its subcellular location is the cytoplasm. It catalyses the reaction 4-imidazolone-5-propanoate = trans-urocanate + H2O. Its pathway is amino-acid degradation; L-histidine degradation into L-glutamate; N-formimidoyl-L-glutamate from L-histidine: step 2/3. Functionally, catalyzes the conversion of urocanate to 4-imidazolone-5-propionate. This chain is Urocanate hydratase, found in Bacillus cereus (strain G9842).